We begin with the raw amino-acid sequence, 88 residues long: UPF0367 protein AM1_1885 (88 aa).

Belongs to the UPF0367 family.

In Acaryochloris marina (strain MBIC 11017), this protein is UPF0367 protein AM1_1885.